The primary structure comprises 136 residues: Protein NrdI (136 aa).

The protein belongs to the NrdI family.

Probably involved in ribonucleotide reductase function. This chain is Protein NrdI, found in Klebsiella pneumoniae subsp. pneumoniae (strain ATCC 700721 / MGH 78578).